The chain runs to 180 residues: MKCLLLALGLALACGVQAIIVTQTMKGLDIQKVAGTWHSLAMAASDISLLDAQSAPLRVYVEELKPTPEGNLEILLQKWENGECAQKKIIAEKTKIPAVFKIDALNENKVLVLDTDYKKYLLFCMENSAEPEQSLACQCLVRTPEVDNEALEKFDKALKALPMHIRLAFNPTQLEGQCHV.

Positions 1 to 18 (MKCLLLALGLALACGVQA) are cleaved as a signal peptide. Intrachain disulfides connect C84-C178, C124-C137, and C124-C139.

This sequence belongs to the calycin superfamily. Lipocalin family. As to quaternary structure, under physiological conditions beta-lactoglobulin exists as an equilibrium mixture of monomeric and dimeric forms. Alternate disulfide bonds occur in equal amounts.

It localises to the secreted. In terms of biological role, lactoglobulin is the primary component of whey, it binds retinol and is probably involved in the transport of that molecule. The polypeptide is Beta-lactoglobulin-1/B (Ovis aries (Sheep)).